The following is a 376-amino-acid chain: MAKADFYETLGVAKTADEKELKSAFRKLAMKFHPDKNPDDKDAERKFKEINEAYEMLKDPQKRAAYDRYGHAAFEHGGMGGGGGGGFAGGGFSDIFEDIFGEMMGGGRARQRSSGGRERGADLRYNMEITLEEAFSGKTAQIRVPTSITCDVCSGSGAKPGTQPKNCGTCQGSGRVRAAQGFFSIERTCPTCHGRGQIIPDPCPKCHGQGRVTEERSLSVNIPAGIEDGTRIRLQGEGEAGARGGPAGDLYIFLSVKPHEFYQRDGADLYCAVPISMTTAALGGTFDVATLDGTKSRVSVPEGTQAGKQFRLKSKGMPVLRSAQTGDLYIQIQIETPQKLTKRQRELLQEFEQLSSKENNPESTGFFARMKEFFEG.

One can recognise a J domain in the interval 5–70 (DFYETLGVAK…QKRAAYDRYG (66 aa)). The segment at 137-215 (GKTAQIRVPT…CHGQGRVTEE (79 aa)) adopts a CR-type zinc-finger fold. Positions 150, 153, 167, 170, 189, 192, 203, and 206 each coordinate Zn(2+). 4 CXXCXGXG motif repeats span residues 150-157 (CDVCSGSG), 167-174 (CGTCQGSG), 189-196 (CPTCHGRG), and 203-210 (CPKCHGQG).

The protein belongs to the DnaJ family. As to quaternary structure, homodimer. Zn(2+) is required as a cofactor.

It is found in the cytoplasm. Functionally, participates actively in the response to hyperosmotic and heat shock by preventing the aggregation of stress-denatured proteins and by disaggregating proteins, also in an autonomous, DnaK-independent fashion. Unfolded proteins bind initially to DnaJ; upon interaction with the DnaJ-bound protein, DnaK hydrolyzes its bound ATP, resulting in the formation of a stable complex. GrpE releases ADP from DnaK; ATP binding to DnaK triggers the release of the substrate protein, thus completing the reaction cycle. Several rounds of ATP-dependent interactions between DnaJ, DnaK and GrpE are required for fully efficient folding. Also involved, together with DnaK and GrpE, in the DNA replication of plasmids through activation of initiation proteins. This is Chaperone protein DnaJ from Rhizobium leguminosarum bv. trifolii (strain WSM2304).